The sequence spans 237 residues: NADH-ubiquinone oxidoreductase assembly factor N7BML (237 aa).

The span at 214-223 (VEKERDDSGK) shows a compositional bias: basic and acidic residues. Residues 214–237 (VEKERDDSGKPAEWTPKAAVRRRG) are disordered.

Belongs to the complex I NDUFA12 subunit family.

Its subcellular location is the mitochondrion. Acts as an assembly factor of mitochondrial complex I. In Yarrowia lipolytica (strain CLIB 122 / E 150) (Yeast), this protein is NADH-ubiquinone oxidoreductase assembly factor N7BML.